Consider the following 236-residue polypeptide: Pyridoxine 5'-phosphate synthase (236 aa).

Asparagine 6 serves as a coordination point for 3-amino-2-oxopropyl phosphate. 8-9 (DH) is a binding site for 1-deoxy-D-xylulose 5-phosphate. Arginine 17 lines the 3-amino-2-oxopropyl phosphate pocket. The active-site Proton acceptor is the histidine 42. 1-deoxy-D-xylulose 5-phosphate-binding residues include arginine 44 and histidine 49. Glutamate 69 serves as the catalytic Proton acceptor. Threonine 99 provides a ligand contact to 1-deoxy-D-xylulose 5-phosphate. The active-site Proton donor is the histidine 190. 3-amino-2-oxopropyl phosphate is bound by residues glycine 191 and 212-213 (GH).

The protein belongs to the PNP synthase family. As to quaternary structure, homooctamer; tetramer of dimers.

Its subcellular location is the cytoplasm. It catalyses the reaction 3-amino-2-oxopropyl phosphate + 1-deoxy-D-xylulose 5-phosphate = pyridoxine 5'-phosphate + phosphate + 2 H2O + H(+). It functions in the pathway cofactor biosynthesis; pyridoxine 5'-phosphate biosynthesis; pyridoxine 5'-phosphate from D-erythrose 4-phosphate: step 5/5. Its function is as follows. Catalyzes the complicated ring closure reaction between the two acyclic compounds 1-deoxy-D-xylulose-5-phosphate (DXP) and 3-amino-2-oxopropyl phosphate (1-amino-acetone-3-phosphate or AAP) to form pyridoxine 5'-phosphate (PNP) and inorganic phosphate. The polypeptide is Pyridoxine 5'-phosphate synthase (Prosthecochloris aestuarii (strain DSM 271 / SK 413)).